Here is a 151-residue protein sequence, read N- to C-terminus: Phosphoribosyl-AMP cyclohydrolase (151 aa).

Over residues 1-13 the composition is skewed to polar residues; that stretch reads MMTLTFASPPQNK. A disordered region spans residues 1-20; the sequence is MMTLTFASPPQNKSDLETGP. Position 93 (Asp93) interacts with Mg(2+). Cys94 is a binding site for Zn(2+). Residues Asp95 and Asp97 each coordinate Mg(2+). Zn(2+) contacts are provided by Cys112 and Cys119.

The protein belongs to the PRA-CH family. In terms of assembly, homodimer. Mg(2+) is required as a cofactor. It depends on Zn(2+) as a cofactor.

Its subcellular location is the cytoplasm. The catalysed reaction is 1-(5-phospho-beta-D-ribosyl)-5'-AMP + H2O = 1-(5-phospho-beta-D-ribosyl)-5-[(5-phospho-beta-D-ribosylamino)methylideneamino]imidazole-4-carboxamide. Its pathway is amino-acid biosynthesis; L-histidine biosynthesis; L-histidine from 5-phospho-alpha-D-ribose 1-diphosphate: step 3/9. Its function is as follows. Catalyzes the hydrolysis of the adenine ring of phosphoribosyl-AMP. This Sinorhizobium medicae (strain WSM419) (Ensifer medicae) protein is Phosphoribosyl-AMP cyclohydrolase.